Reading from the N-terminus, the 127-residue chain is Histidine-containing phosphotransfer protein 4 (127 aa).

The HPt domain maps to 27 to 122 (NPNFVEEVSA…STLRKKLEHY (96 aa)). The residue at position 68 (histidine 68) is a Phosphohistidine.

Interacts with the B-type response regulators ARR1 and ARR2. Two-component system major event consists of a His-to-Asp phosphorelay between a sensor histidine kinase (HK) and a response regulator (RR). In plants, the His-to-Asp phosphorelay involves an additional intermediate named Histidine-containing phosphotransfer protein (HPt). This multistep phosphorelay consists of a His-Asp-His-Asp sequential transfer of a phosphate group between first a His and an Asp of the HK protein, followed by the transfer to a conserved His of the HPt protein and finally the transfer to an Asp in the receiver domain of the RR protein. In terms of tissue distribution, predominantly expressed in aerial parts of the plant.

It is found in the cytoplasm. Its subcellular location is the cytosol. The protein resides in the nucleus. Functions as a two-component phosphorelay mediator between cytokinin sensor histidine kinases and response regulators (B-type ARRs). Plays an important role in propagating cytokinin signal transduction through the multistep His-to-Asp phosphorelay. The chain is Histidine-containing phosphotransfer protein 4 (AHP4) from Arabidopsis thaliana (Mouse-ear cress).